A 201-amino-acid chain; its full sequence is Hydroxymethylphosphonate dioxygenase (201 aa).

Fe cation contacts are provided by H47, H71, D72, H94, H117, and D174.

It depends on Fe(2+) as a cofactor.

The catalysed reaction is hydroxymethylphosphonate + O2 = formate + phosphate + 2 H(+). The enzyme catalyses (1R)-(2-amino-1-hydroxyethyl)phosphonate + O2 = glycine + phosphate + 2 H(+). It carries out the reaction (1R)-(1-hydroxyethyl)phosphonate + O2 = acetate + phosphate + 2 H(+). In terms of biological role, part of an oxidative pathway for utilization of methylphosphonic acid as a phosphate source. Catalyzes the oxidation of hydroxymethylphosphonic acid to produce formate and phosphate. Can also use (1R)-(2-amino-1-hydroxyethyl)phosphonic acid and (R)-1-hydroxyethylphosphonic acid with similar catalytic efficiency. In Gimesia maris (strain ATCC 29201 / DSM 8797 / 534-30) (Planctomyces maris), this protein is Hydroxymethylphosphonate dioxygenase.